Consider the following 277-residue polypeptide: S-formylglutathione hydrolase FrmB (277 aa).

Residues serine 145, aspartate 221, and histidine 254 each act as charge relay system in the active site.

This sequence belongs to the esterase D family.

It catalyses the reaction S-formylglutathione + H2O = formate + glutathione + H(+). Serine hydrolase involved in the detoxification of formaldehyde. Hydrolyzes S-formylglutathione to glutathione and formate. This chain is S-formylglutathione hydrolase FrmB (frmB), found in Escherichia coli O139:H28 (strain E24377A / ETEC).